A 635-amino-acid chain; its full sequence is Chaperone protein HtpG (635 aa).

Residues 1 to 344 (MSETATTNKE…SNDLPLNVSR (344 aa)) are a; substrate-binding. The segment at 345–561 (EILQDNKITQ…DYEMGTQMAK (217 aa)) is b. Residues 562-635 (LLAAAGQPVP…AVNQLLAPSH (74 aa)) form a c region.

The protein belongs to the heat shock protein 90 family. In terms of assembly, homodimer.

It is found in the cytoplasm. In terms of biological role, molecular chaperone. Has ATPase activity. This is Chaperone protein HtpG from Vibrio cholerae serotype O1 (strain ATCC 39541 / Classical Ogawa 395 / O395).